Consider the following 227-residue polypeptide: Uracil phosphoribosyltransferase (227 aa).

36–40 (KGLVK) is a binding site for GTP. 5-phospho-alpha-D-ribose 1-diphosphate is bound by residues Arg86, Arg111, and 145–153 (DPMLATGST). Uracil contacts are provided by residues Ile212 and 217–219 (GDA). Asp218 contacts 5-phospho-alpha-D-ribose 1-diphosphate.

The protein belongs to the UPRTase family. Mg(2+) serves as cofactor.

The catalysed reaction is UMP + diphosphate = 5-phospho-alpha-D-ribose 1-diphosphate + uracil. Its pathway is pyrimidine metabolism; UMP biosynthesis via salvage pathway; UMP from uracil: step 1/1. Its activity is regulated as follows. Allosterically activated by GTP. In terms of biological role, catalyzes the conversion of uracil and 5-phospho-alpha-D-ribose 1-diphosphate (PRPP) to UMP and diphosphate. This chain is Uracil phosphoribosyltransferase, found in Halobacterium salinarum (strain ATCC 700922 / JCM 11081 / NRC-1) (Halobacterium halobium).